Here is an 823-residue protein sequence, read N- to C-terminus: Zygotic DNA replication licensing factor mcm6 (823 aa).

The C4-type zinc-finger motif lies at 159 to 186; it reads CLDCQTLVRDVEQQFKYTQPSICRNPVC. Residues 347–554 enclose the MCM domain; sequence LYHNLCTSLF…TDYAIARRIV (208 aa). 397–404 is an ATP binding site; the sequence is GDPSTAKS. The Arginine finger motif lies at 529–532; sequence SRFD. Residues 666-713 form a disordered region; the sequence is NLDQEDEHEAEEEPQEVINGDASVPSGVNGHVNGMNGHAEEPNAATPK. The span at 667 to 680 shows a compositional bias: acidic residues; the sequence is LDQEDEHEAEEEPQ. Low complexity predominate over residues 692–702; it reads GVNGHVNGMNG.

Belongs to the MCM family. As to quaternary structure, component of the mcm2-7 complex (RLF-M). The complex forms a toroidal hexameric ring with the proposed subunit order mcm2-mcm6-mcm4-mcm7-mcm3-mcm5. Begins to associate with zmcm3, mcm4 and mcm7 into mcm complexes at the neurula stage.

It is found in the nucleus. It carries out the reaction ATP + H2O = ADP + phosphate + H(+). Its function is as follows. Acts as a component of the mcm2-7 complex (mcm complex) which is the putative replicative helicase essential for 'once per cell cycle' DNA replication initiation and elongation in eukaryotic cells. The active ATPase sites in the mcm2-7 ring are formed through the interaction surfaces of two neighboring subunits such that a critical structure of a conserved arginine finger motif is provided in trans relative to the ATP-binding site of the Walker A box of the adjacent subunit. The six ATPase active sites, however, are likely to contribute differentially to the complex helicase activity. The existence of maternal and zygotic forms of mcm3 and mcm6 suggests that specific forms of mcm2-7 complexes may be used during different stages of development. May replace mmcm6 in the mcm2-7 complex. This is Zygotic DNA replication licensing factor mcm6 from Xenopus tropicalis (Western clawed frog).